We begin with the raw amino-acid sequence, 546 residues long: MEPLLFNSGKANPSQDVFIDVEVGDITTKYGSTNTGSFSSMDTVEAQAIKAETARFMEVPQGRHLGVFSTVVLFVSRIMGSGIFAVPSVILLNTGGNKLIYFAIWVFSAAIAFAGLYLFLEFGSWIPKSGGRKNFLERSFERPRLLISVVFSCYSVLTGYALTGSIVFGKYVLSAFGVTDDSWSKYVSISFIIFAVLIHGVSVRHGVFIQNALGGLKLIMIVLMCFAGLYTLFFYKSTGQVAWDLPVTQVEKDSLLSVSSIATAFISSFFCFSGWDTVHTVTSEIKNPVKTLKVSGPLSLIICFVCYTMMNVAYLKVLTYEEIVSAGPLVGSVLFTKLFGPRVGGKFIAFSIAISAASNILVVIYSISRVNQEIFKEGYLPFSIHMSKNWPFDAPLPSISLCGFITIAWILILPKEGESFNYLVSMDGYGNQFFLLLVAIGLFIWRFKHKNEVPEIRASTFGVLAIITLSLYMLMAPFFADPSLNRVGFLPPYQIMSLLVIVACFFFWLVKFVLLPKFFHYKLLPKITYLHDGLIVTEWVKKPCLC.

The Extracellular segment spans residues 1-70; sequence MEPLLFNSGK…QGRHLGVFST (70 aa). A helical membrane pass occupies residues 71–91; that stretch reads VVLFVSRIMGSGIFAVPSVIL. The Cytoplasmic portion of the chain corresponds to 92–98; that stretch reads LNTGGNK. A helical transmembrane segment spans residues 99-119; it reads LIYFAIWVFSAAIAFAGLYLF. The Extracellular segment spans residues 120-148; sequence LEFGSWIPKSGGRKNFLERSFERPRLLIS. A helical membrane pass occupies residues 149–169; sequence VVFSCYSVLTGYALTGSIVFG. Residues 170–188 are Cytoplasmic-facing; it reads KYVLSAFGVTDDSWSKYVS. The chain crosses the membrane as a helical span at residues 189 to 209; sequence ISFIIFAVLIHGVSVRHGVFI. Residues 210–213 are Extracellular-facing; that stretch reads QNAL. Residues 214–234 traverse the membrane as a helical segment; the sequence is GGLKLIMIVLMCFAGLYTLFF. Residues 235–254 lie on the Cytoplasmic side of the membrane; sequence YKSTGQVAWDLPVTQVEKDS. The chain crosses the membrane as a helical span at residues 255–275; that stretch reads LLSVSSIATAFISSFFCFSGW. Residues 276–297 are Extracellular-facing; sequence DTVHTVTSEIKNPVKTLKVSGP. The helical transmembrane segment at 298–318 threads the bilayer; sequence LSLIICFVCYTMMNVAYLKVL. A topological domain (cytoplasmic) is located at residue threonine 319. Residues 320 to 340 traverse the membrane as a helical segment; it reads YEEIVSAGPLVGSVLFTKLFG. Topologically, residues 341 to 346 are extracellular; the sequence is PRVGGK. Residues 347-367 form a helical membrane-spanning segment; the sequence is FIAFSIAISAASNILVVIYSI. Residues 368–393 lie on the Cytoplasmic side of the membrane; sequence SRVNQEIFKEGYLPFSIHMSKNWPFD. A helical membrane pass occupies residues 394-414; the sequence is APLPSISLCGFITIAWILILP. Residues 415 to 423 lie on the Extracellular side of the membrane; the sequence is KEGESFNYL. Residues 424 to 444 traverse the membrane as a helical segment; the sequence is VSMDGYGNQFFLLLVAIGLFI. Over 445-459 the chain is Cytoplasmic; it reads WRFKHKNEVPEIRAS. Residues 460–480 form a helical membrane-spanning segment; it reads TFGVLAIITLSLYMLMAPFFA. Residues 481–494 lie on the Extracellular side of the membrane; sequence DPSLNRVGFLPPYQ. Residues 495-515 form a helical membrane-spanning segment; the sequence is IMSLLVIVACFFFWLVKFVLL. At 516-546 the chain is on the cytoplasmic side; sequence PKFFHYKLLPKITYLHDGLIVTEWVKKPCLC.

It to yeast high affinity methionine permease (MUP1).

Its subcellular location is the membrane. In terms of biological role, very low affinity permease for methionine. This chain is Low-affinity methionine permease (MUP3), found in Saccharomyces cerevisiae (strain ATCC 204508 / S288c) (Baker's yeast).